A 637-amino-acid chain; its full sequence is Threonine--tRNA ligase (637 aa).

The region spanning 1–61 (MLNITLPDGS…TEDSSVQIIT (61 aa)) is the TGS domain. The catalytic stretch occupies residues 242-533 (DHRKLGKQLD…LIENHAGSFP (292 aa)). The Zn(2+) site is built by Cys-333, His-384, and His-510.

Belongs to the class-II aminoacyl-tRNA synthetase family. As to quaternary structure, homodimer. Zn(2+) serves as cofactor.

It is found in the cytoplasm. It catalyses the reaction tRNA(Thr) + L-threonine + ATP = L-threonyl-tRNA(Thr) + AMP + diphosphate + H(+). Functionally, catalyzes the attachment of threonine to tRNA(Thr) in a two-step reaction: L-threonine is first activated by ATP to form Thr-AMP and then transferred to the acceptor end of tRNA(Thr). Also edits incorrectly charged L-seryl-tRNA(Thr). This is Threonine--tRNA ligase from Neisseria meningitidis serogroup C (strain 053442).